The primary structure comprises 233 residues: MMTTPSTPLYRLEGVGKEYDGPGEELVILKGLDLTIEAGESVAIVGASGSGKSTLLHLLGALDTPTWGKLHFLDRDMGAMSPEEKAAFRNREIGFVFQFHHLLPEFSTVENVAMQAIISGMPHAEAYGLAREALDKVGLSGRVEHKVTTLSGGERQRAAIARAILLRPRVLLADEPTGNLDERTGDVVGRMLLDLNRELGMTLIVVTHNRELADLMGRRLELRAGELYDQHRP.

Positions 10 to 233 constitute an ABC transporter domain; that stretch reads YRLEGVGKEY…AGELYDQHRP (224 aa). 46 to 53 is a binding site for ATP; that stretch reads GASGSGKS.

It belongs to the ABC transporter superfamily. Lipoprotein translocase (TC 3.A.1.125) family. As to quaternary structure, the complex is composed of two ATP-binding proteins (LolD) and two transmembrane proteins (LolC and LolE).

It is found in the cell inner membrane. In terms of biological role, part of the ABC transporter complex LolCDE involved in the translocation of mature outer membrane-directed lipoproteins, from the inner membrane to the periplasmic chaperone, LolA. Responsible for the formation of the LolA-lipoprotein complex in an ATP-dependent manner. The chain is Lipoprotein-releasing system ATP-binding protein LolD from Nitratidesulfovibrio vulgaris (strain ATCC 29579 / DSM 644 / CCUG 34227 / NCIMB 8303 / VKM B-1760 / Hildenborough) (Desulfovibrio vulgaris).